The sequence spans 554 residues: Probable pectinesterase/pectinesterase inhibitor 6 (554 aa).

The signal sequence occupies residues 1–32 (MDHKILLTPPKSLYTKCIITIIYVVSISHLNA). Residues 29–183 (HLNAHFITSC…TKSISNSLAV (155 aa)) form a pectinesterase inhibitor 6 region. N-linked (GlcNAc...) asparagine glycosylation is found at N119 and N172. The tract at residues 250-540 (DLVVAKDGSG…FTVENFLDGN (291 aa)) is pectinesterase 6. Substrate-binding residues include T327 and Q357. Residue D380 is the Proton donor; for pectinesterase activity of the active site. C394 and C414 are joined by a disulfide. The active-site Nucleophile; for pectinesterase activity is D401. Positions 460 and 462 each coordinate substrate.

This sequence in the N-terminal section; belongs to the PMEI family. In the C-terminal section; belongs to the pectinesterase family. In terms of tissue distribution, expressed in rosette leaves, flower and siliques.

It localises to the secreted. Its subcellular location is the cell wall. It catalyses the reaction [(1-&gt;4)-alpha-D-galacturonosyl methyl ester](n) + n H2O = [(1-&gt;4)-alpha-D-galacturonosyl](n) + n methanol + n H(+). Its pathway is glycan metabolism; pectin degradation; 2-dehydro-3-deoxy-D-gluconate from pectin: step 1/5. Functionally, acts in the modification of cell walls via demethylesterification of cell wall pectin. This Arabidopsis thaliana (Mouse-ear cress) protein is Probable pectinesterase/pectinesterase inhibitor 6 (PME6).